A 778-amino-acid chain; its full sequence is Endonuclease MutS2 (778 aa).

328-335 (GPNTGGKT) contributes to the ATP binding site. The region spanning 703–778 (LDLRGKRYEE…GSGCTIANLG (76 aa)) is the Smr domain.

Belongs to the DNA mismatch repair MutS family. MutS2 subfamily. Homodimer. Binds to stalled ribosomes, contacting rRNA.

Its function is as follows. Endonuclease that is involved in the suppression of homologous recombination and thus may have a key role in the control of bacterial genetic diversity. In terms of biological role, acts as a ribosome collision sensor, splitting the ribosome into its 2 subunits. Detects stalled/collided 70S ribosomes which it binds and splits by an ATP-hydrolysis driven conformational change. Acts upstream of the ribosome quality control system (RQC), a ribosome-associated complex that mediates the extraction of incompletely synthesized nascent chains from stalled ribosomes and their subsequent degradation. Probably generates substrates for RQC. The protein is Endonuclease MutS2 of Streptococcus equi subsp. zooepidemicus (strain H70).